Reading from the N-terminus, the 496-residue chain is Nitric oxide synthase, inducible (496 aa).

Residues Cys6, Glu32, and Gln36 each contribute to the FMN site. One can recognise an FAD-binding FR-type domain in the interval Lys101–Pro341. Arg121 is an NADP(+) binding site. FAD contacts are provided by His143, Arg277, Tyr279, Ser280, Thr295, and Ala297. Thr300 is a binding site for NADP(+). Residues Tyr301, Val314, Cys315, and Ser316 each coordinate FAD. Residues Thr355, Arg388, Ser417, Arg418, Lys424, Tyr426, Gln428, and Asp461 each coordinate NADP(+).

Belongs to the NOS family. Homodimer. Interacts with NHERF1. Interacts with GAPDH; induced by oxidatively-modified low-densitity lipoprotein (LDL(ox)). Interacts with S100A8 and S100A9 to form the iNOS-S100A8/9 transnitrosylase complex. Interacts with SPSB1, SPSB2 and SPSB4. Interacts with ELOC and CUL5 in the presence of SPSB1 or SPSB2 or SPSB4. Forms a complex with ASL, ASS1 and HSP90AA1; the complex regulates cell-autonomous L-arginine synthesis and citrulline recycling while channeling extracellular L-arginine to nitric oxide synthesis pathway. Requires heme b as cofactor. FAD is required as a cofactor. FMN serves as cofactor. It depends on (6R)-L-erythro-5,6,7,8-tetrahydrobiopterin as a cofactor. In terms of processing, polyubiquitinated; mediated by SPSB1, SPSB2 and SPSB4, leading to proteasomal degradation.

It localises to the cytoplasm. Its subcellular location is the cytosol. The catalysed reaction is 2 L-arginine + 3 NADPH + 4 O2 + H(+) = 2 L-citrulline + 2 nitric oxide + 3 NADP(+) + 4 H2O. Its activity is regulated as follows. Not stimulated by calcium/calmodulin. Its function is as follows. Produces nitric oxide (NO) which is a messenger molecule with diverse functions throughout the body. In macrophages, NO mediates tumoricidal and bactericidal actions. Also has nitrosylase activity and mediates cysteine S-nitrosylation of cytoplasmic target proteins such PTGS2/COX2. As component of the iNOS-S100A8/9 transnitrosylase complex involved in the selective inflammatory stimulus-dependent S-nitrosylation of GAPDH implicated in regulation of the GAIT complex activity and probably multiple targets including ANXA5, EZR, MSN and VIM. Involved in inflammation, enhances the synthesis of pro-inflammatory mediators such as IL6 and IL8. This is Nitric oxide synthase, inducible (NOS2) from Oryctolagus cuniculus (Rabbit).